A 403-amino-acid polypeptide reads, in one-letter code: Tyrosine--tRNA ligase (403 aa).

The 'HIGH' region signature appears at 45-54 (PTAPDLHLGH). A 'KMSKS' region motif is present at residues 229-233 (KMSKS). Lys232 lines the ATP pocket. Residues 341–402 (VLLGRLLAEA…GKRRFARIVF (62 aa)) form the S4 RNA-binding domain.

Belongs to the class-I aminoacyl-tRNA synthetase family. TyrS type 2 subfamily. As to quaternary structure, homodimer.

It is found in the cytoplasm. It carries out the reaction tRNA(Tyr) + L-tyrosine + ATP = L-tyrosyl-tRNA(Tyr) + AMP + diphosphate + H(+). Functionally, catalyzes the attachment of tyrosine to tRNA(Tyr) in a two-step reaction: tyrosine is first activated by ATP to form Tyr-AMP and then transferred to the acceptor end of tRNA(Tyr). This is Tyrosine--tRNA ligase from Geobacter metallireducens (strain ATCC 53774 / DSM 7210 / GS-15).